The following is a 257-amino-acid chain: UPF0246 protein Lcho_2652 (257 aa).

It belongs to the UPF0246 family.

This chain is UPF0246 protein Lcho_2652, found in Leptothrix cholodnii (strain ATCC 51168 / LMG 8142 / SP-6) (Leptothrix discophora (strain SP-6)).